A 175-amino-acid chain; its full sequence is Large ribosomal subunit protein uL10 (175 aa).

This sequence belongs to the universal ribosomal protein uL10 family. In terms of assembly, part of the ribosomal stalk of the 50S ribosomal subunit. The N-terminus interacts with L11 and the large rRNA to form the base of the stalk. The C-terminus forms an elongated spine to which L12 dimers bind in a sequential fashion forming a multimeric L10(L12)X complex.

Functionally, forms part of the ribosomal stalk, playing a central role in the interaction of the ribosome with GTP-bound translation factors. This is Large ribosomal subunit protein uL10 from Delftia acidovorans (strain DSM 14801 / SPH-1).